Consider the following 247-residue polypeptide: Protein GrpE (247 aa).

2 disordered regions span residues 1–68 and 226–247; these read MKKN…KNDD and PAEKQDEKKAEESEAADKKNEN. Composition is skewed to basic and acidic residues over residues 7–35, 43–54, and 228–247; these read KHADKKEAAKEELEKDLQPKDESAVKDEQ, TSKENPQEDKAE, and EKQDEKKAEESEAADKKNEN.

This sequence belongs to the GrpE family. Homodimer.

It is found in the cytoplasm. Its function is as follows. Participates actively in the response to hyperosmotic and heat shock by preventing the aggregation of stress-denatured proteins, in association with DnaK and GrpE. It is the nucleotide exchange factor for DnaK and may function as a thermosensor. Unfolded proteins bind initially to DnaJ; upon interaction with the DnaJ-bound protein, DnaK hydrolyzes its bound ATP, resulting in the formation of a stable complex. GrpE releases ADP from DnaK; ATP binding to DnaK triggers the release of the substrate protein, thus completing the reaction cycle. Several rounds of ATP-dependent interactions between DnaJ, DnaK and GrpE are required for fully efficient folding. This is Protein GrpE from Treponema denticola (strain ATCC 35405 / DSM 14222 / CIP 103919 / JCM 8153 / KCTC 15104).